Consider the following 437-residue polypeptide: Probable N-acetylmuramidase (437 aa).

A signal peptide spans 1–57 (MPVSRVKVKNRHLKKKTKKPLAFYKPTTKFVGAVLIAGTLTTTHELLLQQTSPMVQA). Disordered stretches follow at residues 217–244 (SSAGNTNSGGSTTTNTNNNSGTNSSSTT), 291–319 (SSTNSGGSNNSASTTPTTSVTPAKPASQT), and 367–392 (ATSNPSTGSGSTATNNSNSTSSNSNA). The 44-residue stretch at 243 to 286 (TTYTVKSGDTLWGISQRYGISVAQIQSANNLKSTIIYIGQKLLL) folds into the LysM 1 domain. The span at 291–317 (SSTNSGGSNNSASTTPTTSVTPAKPAS) shows a compositional bias: low complexity. Positions 319-362 (TSVKVKSGDTLWALSVKYKTSIAQLKSWNHLSSDTIYIGQNLIV) constitute a LysM 2 domain. A LysM 3 domain is found at 393–436 (SIHKVVKGDTLWGLSQKSGSPIASIKAWNHLSSDTILIGQYLRI).

It belongs to the glycosyl hydrolase 73 family.

It localises to the secreted. The catalysed reaction is Hydrolysis of (1-&gt;4)-beta-linkages between N-acetylmuramic acid and N-acetyl-D-glucosamine residues in a peptidoglycan and between N-acetyl-D-glucosamine residues in chitodextrins.. Its function is as follows. Hydrolyzes the cell wall of L.lactis and M.lysodeikticus. Required for cell separation during growth. This is Probable N-acetylmuramidase (acmA) from Lactococcus lactis subsp. cremoris (Streptococcus cremoris).